Reading from the N-terminus, the 273-residue chain is Putative phosphoenolpyruvate synthase regulatory protein (273 aa).

153-160 contacts ADP; the sequence is GVSRCGKT.

Belongs to the pyruvate, phosphate/water dikinase regulatory protein family. PSRP subfamily.

It carries out the reaction [pyruvate, water dikinase] + ADP = [pyruvate, water dikinase]-phosphate + AMP + H(+). The enzyme catalyses [pyruvate, water dikinase]-phosphate + phosphate + H(+) = [pyruvate, water dikinase] + diphosphate. Functionally, bifunctional serine/threonine kinase and phosphorylase involved in the regulation of the phosphoenolpyruvate synthase (PEPS) by catalyzing its phosphorylation/dephosphorylation. This chain is Putative phosphoenolpyruvate synthase regulatory protein, found in Yersinia pseudotuberculosis serotype I (strain IP32953).